The following is a 552-amino-acid chain: C-type lectin receptor-like tyrosine-protein kinase At1g52310 (552 aa).

An N-terminal signal peptide occupies residues 1-27 (MELKWVSCRKQSLFLISCLALLCLASL). The Extracellular portion of the chain corresponds to 28–201 (DTISCESTQN…DIKCRNCHKY (174 aa)). 9 N-linked (GlcNAc...) asparagine glycosylation sites follow: Asn37, Asn59, Asn69, Asn106, Asn118, Asn137, Asn154, Asn169, and Asn180. The region spanning 59–188 (NQTKCYAYFK…CNASHAFVCA (130 aa)) is the C-type lectin domain. 2 disulfide bridges follow: Cys80/Cys187 and Cys164/Cys179. Residues 202-222 (LVILAVVSGLILFTTFAIILW) traverse the membrane as a helical segment. Residues 223–552 (LLVYKRSKKR…QQLVQPLEVK (330 aa)) are Cytoplasmic-facing. Residues 268–546 (SEANRLAGDA…HVVHQLQQLV (279 aa)) form the Protein kinase domain. ATP contacts are provided by residues 274–282 (AGDAKTGGT) and Lys296. Asp394 serves as the catalytic Proton acceptor.

It belongs to the protein kinase superfamily. Tyr protein kinase family.

It is found in the cell membrane. The enzyme catalyses L-tyrosyl-[protein] + ATP = O-phospho-L-tyrosyl-[protein] + ADP + H(+). This is C-type lectin receptor-like tyrosine-protein kinase At1g52310 from Arabidopsis thaliana (Mouse-ear cress).